Consider the following 138-residue polypeptide: Small ribosomal subunit protein uS11 (138 aa).

Positions Met-1–Lys-12 are enriched in low complexity. Disordered regions lie at residues Met-1–His-27 and Ile-119–Val-138. Positions Lys-13–Lys-22 are enriched in basic residues.

The protein belongs to the universal ribosomal protein uS11 family. As to quaternary structure, part of the 30S ribosomal subunit. Interacts with proteins S7 and S18. Binds to IF-3.

Located on the platform of the 30S subunit, it bridges several disparate RNA helices of the 16S rRNA. Forms part of the Shine-Dalgarno cleft in the 70S ribosome. The chain is Small ribosomal subunit protein uS11 from Mycobacteroides abscessus (strain ATCC 19977 / DSM 44196 / CCUG 20993 / CIP 104536 / JCM 13569 / NCTC 13031 / TMC 1543 / L948) (Mycobacterium abscessus).